The sequence spans 618 residues: Uptake hydrogenase large subunit (618 aa).

Cys-75, Cys-78, Cys-597, and Cys-600 together coordinate Ni(2+).

The protein belongs to the [NiFe]/[NiFeSe] hydrogenase large subunit family. In terms of assembly, heterodimer of a large and a small subunit. Requires Ni(2+) as cofactor.

Its subcellular location is the cell membrane. The enzyme catalyses H2 + A = AH2. In terms of biological role, this enzyme recycles the H(2) produced by nitrogenase to increase the production of ATP and to protect nitrogenase against inhibition or damage by O(2) under carbon- or phosphate-limited conditions. The polypeptide is Uptake hydrogenase large subunit (hoxG) (Cupriavidus necator (strain ATCC 17699 / DSM 428 / KCTC 22496 / NCIMB 10442 / H16 / Stanier 337) (Ralstonia eutropha)).